The primary structure comprises 336 residues: D-erythrose-4-phosphate dehydrogenase (336 aa).

11–12 serves as a coordination point for NAD(+); it reads RI. Substrate-binding positions include 153–155, Arg199, 212–213, and Arg235; these read SCT and TR. The active-site Nucleophile is Cys154. Asn317 serves as a coordination point for NAD(+).

The protein belongs to the glyceraldehyde-3-phosphate dehydrogenase family. Epd subfamily. In terms of assembly, homotetramer.

The protein localises to the cytoplasm. It catalyses the reaction D-erythrose 4-phosphate + NAD(+) + H2O = 4-phospho-D-erythronate + NADH + 2 H(+). The protein operates within cofactor biosynthesis; pyridoxine 5'-phosphate biosynthesis; pyridoxine 5'-phosphate from D-erythrose 4-phosphate: step 1/5. In terms of biological role, catalyzes the NAD-dependent conversion of D-erythrose 4-phosphate to 4-phosphoerythronate. In Alteromonas mediterranea (strain DSM 17117 / CIP 110805 / LMG 28347 / Deep ecotype), this protein is D-erythrose-4-phosphate dehydrogenase.